The primary structure comprises 255 residues: HTH-type transcriptional regulator SkgA (255 aa).

Residues Val-3–Gln-72 form the HTH merR-type domain. Positions Val-6–Ala-25 form a DNA-binding region, H-T-H motif.

Functionally, regulates the induction of katG (catalase-peroxidase) in stationary phase. The chain is HTH-type transcriptional regulator SkgA (skgA) from Caulobacter vibrioides (strain ATCC 19089 / CIP 103742 / CB 15) (Caulobacter crescentus).